The chain runs to 660 residues: UvrABC system protein B (660 aa).

The Helicase ATP-binding domain occupies 26-414 (KKVLAGQRHQ…PEMTEQIIRP (389 aa)). An ATP-binding site is contributed by 39-46 (GATGTGKT). The short motif at 92 to 115 (YYDYYQPEAYVPSTDTFIEKDASI) is the Beta-hairpin element. The Helicase C-terminal domain maps to 430–596 (QIDNLIEEIR…TIRKEVRDVI (167 aa)). The UVR domain occupies 624-659 (EKVIEQMENEMKQAAKDLDFEKAAELRDVILELKAE).

This sequence belongs to the UvrB family. Forms a heterotetramer with UvrA during the search for lesions. Interacts with UvrC in an incision complex.

The protein localises to the cytoplasm. Its function is as follows. The UvrABC repair system catalyzes the recognition and processing of DNA lesions. A damage recognition complex composed of 2 UvrA and 2 UvrB subunits scans DNA for abnormalities. Upon binding of the UvrA(2)B(2) complex to a putative damaged site, the DNA wraps around one UvrB monomer. DNA wrap is dependent on ATP binding by UvrB and probably causes local melting of the DNA helix, facilitating insertion of UvrB beta-hairpin between the DNA strands. Then UvrB probes one DNA strand for the presence of a lesion. If a lesion is found the UvrA subunits dissociate and the UvrB-DNA preincision complex is formed. This complex is subsequently bound by UvrC and the second UvrB is released. If no lesion is found, the DNA wraps around the other UvrB subunit that will check the other stand for damage. The protein is UvrABC system protein B of Oceanobacillus iheyensis (strain DSM 14371 / CIP 107618 / JCM 11309 / KCTC 3954 / HTE831).